Here is a 476-residue protein sequence, read N- to C-terminus: ATP synthase subunit beta (476 aa).

158–165 contacts ATP; sequence GGAGVGKT.

This sequence belongs to the ATPase alpha/beta chains family. F-type ATPases have 2 components, CF(1) - the catalytic core - and CF(0) - the membrane proton channel. CF(1) has five subunits: alpha(3), beta(3), gamma(1), delta(1), epsilon(1). CF(0) has three main subunits: a(1), b(2) and c(9-12). The alpha and beta chains form an alternating ring which encloses part of the gamma chain. CF(1) is attached to CF(0) by a central stalk formed by the gamma and epsilon chains, while a peripheral stalk is formed by the delta and b chains.

It localises to the cell inner membrane. The enzyme catalyses ATP + H2O + 4 H(+)(in) = ADP + phosphate + 5 H(+)(out). In terms of biological role, produces ATP from ADP in the presence of a proton gradient across the membrane. The catalytic sites are hosted primarily by the beta subunits. This is ATP synthase subunit beta from Paracidovorax citrulli (strain AAC00-1) (Acidovorax citrulli).